Consider the following 804-residue polypeptide: Probable copper-exporting P-type ATPase (804 aa).

Over 1–101 the chain is Cytoplasmic; sequence MVKDTYISSA…VEHLSRMKRK (101 aa). Residues 16 to 82 enclose the HMA 1 domain; the sequence is MERTVRVTGM…VIEDLGYGVV (67 aa). The Cu(+) site is built by Cys27 and Cys30. Residues 102-122 form a helical membrane-spanning segment; it reads LYVAAFAGVLLLFLAHFISLP. At 123–128 the chain is on the extracellular side; it reads YEDFVQ. The helical transmembrane segment at 129 to 149 threads the bilayer; that stretch reads LLIALPAIFYSGSSIFKAAFS. The Cytoplasmic segment spans residues 150-159; that stretch reads ALRRRTLNMD. The chain crosses the membrane as a helical span at residues 160–180; the sequence is VMYSMGVGAAFLASVLSTAGV. At 181 to 186 the chain is on the extracellular side; that stretch reads LPREYS. A helical transmembrane segment spans residues 187–204; it reads FYETSVLLLAFLLLGRTL. The Cytoplasmic portion of the chain corresponds to 205-339; it reads EARAKSRTGE…PIQRLADKVV (135 aa). Residues 340 to 360 form a helical membrane-spanning segment; that stretch reads AYFIPTVLLVAISAFIYWYFI. Over 361–364 the chain is Extracellular; the sequence is AHAP. A helical transmembrane segment spans residues 365-385; it reads LLFAFTTLIAVLVVACPCAFG. Residues 386 to 680 lie on the Cytoplasmic side of the membrane; that stretch reads LATPTALTVG…KIKQNIFWAL (295 aa). Asp424 functions as the 4-aspartylphosphate intermediate in the catalytic mechanism. ATP is bound by residues 457–462 and 490–501; these read ERRSEH and GEGVVADGILVG. 2 residues coordinate Mg(2+): Asp618 and Asp622. A helical transmembrane segment spans residues 681-701; that stretch reads IYNVILIPAAAGLLYPIFGVV. The Extracellular portion of the chain corresponds to 702–704; the sequence is FRP. The helical transmembrane segment at 705–725 threads the bilayer; it reads EFAGLAMAMSSVSVVANSLLL. Topologically, residues 726 to 804 are cytoplasmic; it reads RNYVPPIRRG…AAGYQAKLRS (79 aa). The HMA 2 domain occupies 740–801; sequence EKIVLELSGL…AVEAAGYQAK (62 aa). Cys751 and Cys754 together coordinate Cu(+).

It belongs to the cation transport ATPase (P-type) (TC 3.A.3) family. Type IB subfamily. In terms of assembly, interacts with CopZ probably in the CopZ Cu(+)-bound form.

The protein localises to the cell membrane. The enzyme catalyses Cu(+)(in) + ATP + H2O = Cu(+)(out) + ADP + phosphate + H(+). Activated by Cu(+) and Ag(+) and inhibited by vanadate. Activated by CopZ in its Cu(+)-bound form. Its function is as follows. Probably involved in copper and silver export. The sequence is that of Probable copper-exporting P-type ATPase (copA) from Archaeoglobus fulgidus (strain ATCC 49558 / DSM 4304 / JCM 9628 / NBRC 100126 / VC-16).